A 532-amino-acid chain; its full sequence is E3 ubiquitin-protein ligase MGRN1 (532 aa).

Gly-2 is lipidated: N-myristoyl glycine. Residues Glu-277–Cys-316 form an RING-type zinc finger. The short motif at Pro-384–Pro-387 is the Required for TSG101-binding element. Tyr-389 carries the post-translational modification Phosphotyrosine. The disordered stretch occupies residues Leu-419–Leu-518. The segment covering Gly-422 to Ser-435 has biased composition (polar residues). Residues Ser-428, Ser-449, Ser-452, and Ser-501 each carry the phosphoserine modification. Residues Glu-442–Asp-453 are compositionally biased toward acidic residues.

Interacts with MC1R and MC4R. Interacts with TSG101. Interacts with mislocalized cytosolically exposed PRNP; this interaction alters MGRN1 subcellular location and causes lysosomal enlargement. Post-translationally, autoubiquitinated in vitro. As to expression, widely expressed, with highest levels in brain, heart, kidney and liver. In the CNS, especially prominent in the Purkinje cells of the cerebellum. In the skin, expressed in the basal layer of the epidermis and hair follicles, primarily in the outer root sheath. Isoforms 1, 3, 4 and 5 are equally expressed in the liver. Isoforms 1, 3 and 4 are most abundant in brain, kidney and heart, respectively.

The protein localises to the early endosome. It is found in the cytoplasm. The protein resides in the cell membrane. Its subcellular location is the nucleus. The catalysed reaction is S-ubiquitinyl-[E2 ubiquitin-conjugating enzyme]-L-cysteine + [acceptor protein]-L-lysine = [E2 ubiquitin-conjugating enzyme]-L-cysteine + N(6)-ubiquitinyl-[acceptor protein]-L-lysine.. Its pathway is protein modification; protein ubiquitination. Functionally, E3 ubiquitin-protein ligase. Mediates TSG101 monoubiquitination at multiple sites. Plays a role in the regulation of endosome-to-lysosome trafficking. Impairs MC1R- and MC4R-signaling by competing with GNAS-binding to MCRs and inhibiting agonist-induced cAMP production. Does not inhibit ADRB2-signaling. Does not promote MC1R ubiquitination. Also acts as a negative regulator of hedgehog signaling. This Mus musculus (Mouse) protein is E3 ubiquitin-protein ligase MGRN1 (Mgrn1).